A 354-amino-acid polypeptide reads, in one-letter code: Type II secretion system protein K (354 aa).

A propeptide spans 1-7 (MSRRQRG) (leader sequence). A helical transmembrane segment spans residues 8-28 (VALLIVMLMLSLMVTIAASIT). Residues 29-354 (ERSGKAWQRT…QYGGYRTVNP (326 aa)) are Periplasmic-facing. Residues 114–151 (NVTPNNASGNNTSGNNNAANGSSGNGNSPQPPKVGTSE) form a disordered region. Low complexity predominate over residues 118–141 (NNASGNNTSGNNNAANGSSGNGNS).

Belongs to the GSP K family. Type II secretion is composed of four main components: the outer membrane complex, the inner membrane complex, the cytoplasmic secretion ATPase and the periplasm-spanning pseudopilus. Interacts with core component OutG. Cleaved by prepilin peptidase.

The protein resides in the cell inner membrane. Its function is as follows. Component of the type II secretion system required for the energy-dependent secretion of extracellular factors such as proteases and toxins from the periplasm. Plays a role in pseudopilus assembly and seems to control its length. Interacts with the pseudopilus tip complex that is critical for the recognition and binding of secretion substrates. This chain is Type II secretion system protein K (outK), found in Dickeya chrysanthemi (Pectobacterium chrysanthemi).